The chain runs to 457 residues: Protein unc-93 homolog A (457 aa).

A run of 5 helical transmembrane segments spans residues 8 to 28 (VLVLSFGFLLLFTAYGGLQSL), 42 to 62 (ALSTLYGGMLLSSMFLPPVLI), 65 to 85 (LGCKWTLVLAMCCYVAFSLGN), 86 to 106 (FYASWYTLIPASVLVGLGAAA), and 140 to 160 (IFFLIFQSSGVWGNLISSLVF). A glycan (N-linked (GlcNAc...) asparagine) is linked at Asn190. The next 6 helical transmembrane spans lie at 202–222 (TLLGIYTGCGFLAVLLMAVFL), 257–277 (LRLLILLPMLSGFEQAFLSGD), 291–311 (FVGYVMICFGAADALCSVLFG), 320–340 (TVLFALGAVTQLACIIALLLW), 344–364 (PSQLPVFFVFPSLWGMADAVW), and 395–415 (FVIAFGYSTFLCVSVKLYVLL). A disordered region spans residues 438–457 (GPLAAGRTKPAEDGATQTKL).

This sequence belongs to the unc-93 family.

The protein resides in the cell membrane. This Bos taurus (Bovine) protein is Protein unc-93 homolog A (UNC93A).